Consider the following 125-residue polypeptide: Inner membrane protein YbaN (125 aa).

The Cytoplasmic portion of the chain corresponds to 1 to 6; it reads MQRIIL. A helical transmembrane segment spans residues 7–26; it reads IIIGWLAVVLGTLGVVLPVL. The Periplasmic segment spans residues 27-45; that stretch reads PTTPFILLAAWCFARSSPR. The helical transmembrane segment at 46–63 threads the bilayer; sequence FHAWLLYRSWFGSYLRFW. Over 64-74 the chain is Cytoplasmic; it reads QKHHAMPRGVK. The helical transmembrane segment at 75–92 threads the bilayer; it reads PRAILLILLTFAISLWFV. Residues 93 to 95 lie on the Periplasmic side of the membrane; sequence QMP. Residues 96 to 118 form a helical membrane-spanning segment; the sequence is WVRIMLLVILACLLFYMWRIPVI. Topologically, residues 119 to 125 are cytoplasmic; that stretch reads DEKQEKH.

The protein localises to the cell inner membrane. In Escherichia coli O157:H7, this protein is Inner membrane protein YbaN (ybaN).